The chain runs to 58 residues: uncharacterized protein (58 aa).

2 consecutive transmembrane segments (helical) span residues 7 to 27 (IFDI…VAKT) and 29 to 49 (YGTG…AYKI).

The protein localises to the cell membrane. This is an uncharacterized protein from Bacillus subtilis (strain 168).